The sequence spans 121 residues: Large ribosomal subunit protein bL12 (121 aa).

Belongs to the bacterial ribosomal protein bL12 family. As to quaternary structure, homodimer. Part of the ribosomal stalk of the 50S ribosomal subunit. Forms a multimeric L10(L12)X complex, where L10 forms an elongated spine to which 2 to 4 L12 dimers bind in a sequential fashion. Binds GTP-bound translation factors.

In terms of biological role, forms part of the ribosomal stalk which helps the ribosome interact with GTP-bound translation factors. Is thus essential for accurate translation. This is Large ribosomal subunit protein bL12 from Pectobacterium carotovorum subsp. carotovorum (strain PC1).